A 486-amino-acid chain; its full sequence is ATP synthase subunit beta (486 aa).

170–177 provides a ligand contact to ATP; the sequence is GGAGVGKT.

Belongs to the ATPase alpha/beta chains family. In terms of assembly, F-type ATPases have 2 components, CF(1) - the catalytic core - and CF(0) - the membrane proton channel. CF(1) has five subunits: alpha(3), beta(3), gamma(1), delta(1), epsilon(1). CF(0) has three main subunits: a(1), b(2) and c(9-12). The alpha and beta chains form an alternating ring which encloses part of the gamma chain. CF(1) is attached to CF(0) by a central stalk formed by the gamma and epsilon chains, while a peripheral stalk is formed by the delta and b chains.

Its subcellular location is the cell membrane. The enzyme catalyses ATP + H2O + 4 H(+)(in) = ADP + phosphate + 5 H(+)(out). In terms of biological role, produces ATP from ADP in the presence of a proton gradient across the membrane. The catalytic sites are hosted primarily by the beta subunits. This chain is ATP synthase subunit beta, found in Clavibacter michiganensis subsp. michiganensis (strain NCPPB 382).